The sequence spans 489 residues: Acetyl-coenzyme A carboxylase carboxyl transferase subunit beta, chloroplastic (489 aa).

The 265-residue stretch at 225 to 489 (LWIQCDNCYG…FFPLNKTEIK (265 aa)) folds into the CoA carboxyltransferase N-terminal domain. The Zn(2+) site is built by C229, C232, C245, and C248. A C4-type zinc finger spans residues 229–248 (CDNCYGLMYKKVEMNVCEEC).

The protein belongs to the AccD/PCCB family. In terms of assembly, acetyl-CoA carboxylase is a heterohexamer composed of biotin carboxyl carrier protein, biotin carboxylase and 2 subunits each of ACCase subunit alpha and ACCase plastid-coded subunit beta (accD). The cofactor is Zn(2+).

It localises to the plastid. The protein resides in the chloroplast stroma. It catalyses the reaction N(6)-carboxybiotinyl-L-lysyl-[protein] + acetyl-CoA = N(6)-biotinyl-L-lysyl-[protein] + malonyl-CoA. It participates in lipid metabolism; malonyl-CoA biosynthesis; malonyl-CoA from acetyl-CoA: step 1/1. In terms of biological role, component of the acetyl coenzyme A carboxylase (ACC) complex. Biotin carboxylase (BC) catalyzes the carboxylation of biotin on its carrier protein (BCCP) and then the CO(2) group is transferred by the transcarboxylase to acetyl-CoA to form malonyl-CoA. This chain is Acetyl-coenzyme A carboxylase carboxyl transferase subunit beta, chloroplastic, found in Draba nemorosa (Woodland whitlowgrass).